We begin with the raw amino-acid sequence, 447 residues long: UPF0210 protein LAF_0976 (447 aa).

This sequence belongs to the UPF0210 family. As to quaternary structure, homodimer.

In Limosilactobacillus fermentum (strain NBRC 3956 / LMG 18251) (Lactobacillus fermentum), this protein is UPF0210 protein LAF_0976.